The chain runs to 478 residues: uncharacterized protein (478 aa).

One can recognise an RRM domain in the interval 5-85 (KRIYVGGLSS…SKLRIEEARP (81 aa)). Phosphoserine occurs at positions 207 and 308.

Its subcellular location is the nucleus. The protein localises to the nucleolus. This is an uncharacterized protein from Schizosaccharomyces pombe (strain 972 / ATCC 24843) (Fission yeast).